We begin with the raw amino-acid sequence, 91 residues long: Acylphosphatase (91 aa).

One can recognise an Acylphosphatase-like domain in the interval 3–90 (RVLIRVKGKV…EIYLDFSITQ (88 aa)). Active-site residues include arginine 18 and asparagine 36.

Belongs to the acylphosphatase family.

It carries out the reaction an acyl phosphate + H2O = a carboxylate + phosphate + H(+). The sequence is that of Acylphosphatase (acyP) from Shewanella amazonensis (strain ATCC BAA-1098 / SB2B).